Here is a 509-residue protein sequence, read N- to C-terminus: Ribonuclease Y (509 aa).

The chain crosses the membrane as a helical span at residues 3–23 (IIFSSIFAGFILGFLIRVFLG). A KH domain is found at 197 to 257 (TVASVELPND…IRKELAKRTL (61 aa)). The region spanning 323–418 (VLSHSKETAI…VQIADAISAS (96 aa)) is the HD domain.

This sequence belongs to the RNase Y family.

The protein resides in the cell membrane. Endoribonuclease that initiates mRNA decay. In Borreliella afzelii (strain PKo) (Borrelia afzelii), this protein is Ribonuclease Y.